Reading from the N-terminus, the 273-residue chain is Proteasome subunit beta type-10 (273 aa).

The residue at position 1 (M1) is an N-acetylmethionine. Residues 1-39 (MLKQAVEHRGGFSFENCQRNASLEHVLPGLRVPLARKTG) constitute a propeptide, removed in mature form. The active-site Nucleophile is T40. S230 is subject to Phosphoserine.

This sequence belongs to the peptidase T1B family. The 26S proteasome consists of a 20S proteasome core and two 19S regulatory subunits. The 20S proteasome core is composed of 28 subunits that are arranged in four stacked rings, resulting in a barrel-shaped structure. The two end rings are each formed by seven alpha subunits, and the two central rings are each formed by seven beta subunits. The catalytic chamber with the active sites is on the inside of the barrel. Component of the immunoproteasome, where it displaces the equivalent housekeeping subunit PSMB7. Component of the spermatoproteasome, a form of the proteasome specifically found in testis. In terms of processing, autocleaved. The resulting N-terminal Thr residue of the mature subunit is responsible for the nucleophile proteolytic activity.

The protein resides in the cytoplasm. It is found in the nucleus. It catalyses the reaction Cleavage of peptide bonds with very broad specificity.. The proteasome is a multicatalytic proteinase complex which is characterized by its ability to cleave peptides with Arg, Phe, Tyr, Leu, and Glu adjacent to the leaving group at neutral or slightly basic pH. The proteasome has an ATP-dependent proteolytic activity. This subunit is involved in antigen processing to generate class I binding peptides. This chain is Proteasome subunit beta type-10 (Psmb10), found in Rattus norvegicus (Rat).